Reading from the N-terminus, the 433-residue chain is Probable non-inhibitory serpin-Z5 (433 aa).

The segment covering Met-1 to Thr-12 has biased composition (basic and acidic residues). A disordered region spans residues Met-1–Ser-43. A compositionally biased stretch (basic residues) spans Thr-23 to Arg-36. The RCL stretch occupies residues Gly-380–Phe-404.

Belongs to the serpin family. Weakly expressed during seedling development.

The polypeptide is Probable non-inhibitory serpin-Z5 (Arabidopsis thaliana (Mouse-ear cress)).